Reading from the N-terminus, the 482-residue chain is tRNA(Ile)-lysidine synthase (482 aa).

An ATP-binding site is contributed by 28–33 (SGGPDS).

This sequence belongs to the tRNA(Ile)-lysidine synthase family.

It localises to the cytoplasm. It catalyses the reaction cytidine(34) in tRNA(Ile2) + L-lysine + ATP = lysidine(34) in tRNA(Ile2) + AMP + diphosphate + H(+). Its function is as follows. Ligates lysine onto the cytidine present at position 34 of the AUA codon-specific tRNA(Ile) that contains the anticodon CAU, in an ATP-dependent manner. Cytidine is converted to lysidine, thus changing the amino acid specificity of the tRNA from methionine to isoleucine. The chain is tRNA(Ile)-lysidine synthase from Symbiobacterium thermophilum (strain DSM 24528 / JCM 14929 / IAM 14863 / T).